Reading from the N-terminus, the 185-residue chain is Ribosome-recycling factor (185 aa).

This sequence belongs to the RRF family.

Its subcellular location is the cytoplasm. Functionally, responsible for the release of ribosomes from messenger RNA at the termination of protein biosynthesis. May increase the efficiency of translation by recycling ribosomes from one round of translation to another. This Buchnera aphidicola subsp. Acyrthosiphon pisum (strain Tuc7) protein is Ribosome-recycling factor.